Here is a 2014-residue protein sequence, read N- to C-terminus: Leucine-rich repeat serine/threonine-protein kinase 1 (2014 aa).

ANK repeat units lie at residues 51-81 (QCPS…CEES), 86-116 (EKGQ…ELPT), 119-148 (TDDN…GPCT), 152-182 (LLNW…DPEN), and 193-222 (IVRL…YFCS). LRR repeat units lie at residues 279–300 (QITE…IPWG), 303–324 (NLKK…QSSD), 330–351 (RLLE…FLHL), 353–374 (KLQK…ENAT), 381–402 (KLQE…FMHS), 405–426 (SLTS…WSCP), 427–447 (LKCC…MAVF), 451–472 (HLRD…LFQL), 474–495 (ALMF…EKWT), 498–519 (QLKT…LKTK), 549–570 (SLEV…VCLL), 572–594 (NLSE…LGQL), and 596–617 (NLWQ…VRKE). The Roc domain maps to 632–826 (KAEKCKLMKM…QLIFHVTCNM (195 aa)). GDP is bound by residues proline 647, arginine 648, glycine 650, lysine 651, serine 652, threonine 653, glutamate 670, histidine 758, aspartate 760, cysteine 806, and lysine 807. Positions 840–1237 (GRLIPRSYIS…PARLFLENSK (398 aa)) constitute a COR domain. Threonine 1061 bears the Phosphothreonine mark. Residues serine 1064 and serine 1074 each carry the phosphoserine modification. Threonine 1075 is modified (phosphothreonine). The Protein kinase domain maps to 1242–1525 (EGENSILGQG…VVSQMKDPTF (284 aa)). ATP contacts are provided by residues 1248-1256 (LGQGGSGTV) and lysine 1270. The Proton acceptor role is filled by aspartate 1386. WD repeat units follow at residues 1539-1579 (AFFS…RMTC), 1582-1622 (MKLS…QALD), 1623-1668 (TPAV…SCSY), 1693-1729 (VKAM…RLEP), 1730-1778 (YAAP…YFCG), 1779-1948 (DPNP…AVLK), and 1950-1986 (RELN…AVWR). Positions 1791–1906 (PSVLETPGSH…MDGETFSQHL (116 aa)) are WD40 loop; involved in dimer stabilization. Residues 1839 to 1895 (SMSSYSSSPPHQDPRSPSSLPSSLTSYSSVPFSANYEDSDRLQEPSVTSDRTEHDLS) are disordered. Positions 1853 to 1871 (RSPSSLPSSLTSYSSVPFS) are enriched in low complexity.

The protein belongs to the protein kinase superfamily. TKL Ser/Thr protein kinase family. ROCO subfamily. In terms of assembly, homodimer. The homodimer is autoinhibited and stabilized by its N-terminal residues and ANK repeats. Interacts with CSK. It depends on Mg(2+) as a cofactor. Requires Mn(2+) as cofactor. In terms of processing, autophosphorylated. Autophosphorylation in inhibited in its dimeric state. Phosphorylated by protein kinase C isozymes PRKCA, PRKCB, PRKCG, PRKCE, PRKCZ and PRKCT at Ser-1064, Ser-1074 and Thr-1075. Phosphorylation at these residues activates the kinase activity of LRRK1 to phosphorylate RAB7A. In terms of tissue distribution, expressed in osteoclasts and bone marrow stromal cells.

It localises to the cytoplasm. It is found in the cell membrane. It catalyses the reaction L-seryl-[protein] + ATP = O-phospho-L-seryl-[protein] + ADP + H(+). The catalysed reaction is L-threonyl-[protein] + ATP = O-phospho-L-threonyl-[protein] + ADP + H(+). With respect to regulation, activated by phosphorylation by PKC. Binds both GTP and GDP; binding of GTP stimulates kinase activity. Sterically autoinhibited in its dimeric state. Its function is as follows. Serine/threonine-protein kinase which phosphorylates RAB proteins involved in intracellular trafficking. Phosphorylates RAB7A; this activity is dependent on protein kinase C (PKC) activation. Plays a role in the negative regulation of bone mass, acting through the maturation of osteoclasts. The protein is Leucine-rich repeat serine/threonine-protein kinase 1 of Mus musculus (Mouse).